The primary structure comprises 201 residues: Regulator of G-protein signaling rgs-1 (201 aa).

Positions 37-156 (SWQQSFDTLM…FLTSIFYRET (120 aa)) constitute an RGS domain. The tract at residues 168-201 (GGDEEKEREQRAERARLNVPATAAEGSSKDISMV) is disordered. A compositionally biased stretch (basic and acidic residues) spans 170 to 183 (DEEKEREQRAERAR).

Expressed in most or all neurons.

Its function is as follows. Inhibits G protein signaling in nervous system, interacting preferentially with the G(O) subfamily member goa-1. In vitro, protein acts as a GTPase activator of goa-1. Rgs-1 and rgs-2 redundantly adjust signaling when worms are fed to allow rapid induction of egg-laying behavior. The polypeptide is Regulator of G-protein signaling rgs-1 (rgs-1) (Caenorhabditis elegans).